Reading from the N-terminus, the 339-residue chain is Acyl-CoA dehydrogenase FadE28 (339 aa).

R227, Q238, H295, and G299 together coordinate FAD.

The protein belongs to the acyl-CoA dehydrogenase family. As to quaternary structure, heterotetramer composed of FadE28 and FadE29. FAD serves as cofactor.

It catalyses the reaction 3-oxochol-4-en-22-oyl-CoA + A = 3-oxochola-4,17-dien-22-oyl-CoA + AH2. The protein operates within steroid metabolism; cholesterol degradation. Functionally, involved in the third cycle of side chain dehydrogenation in the beta-oxidation of cholesterol catabolism. May play an important role for the initial macrophage invasion, possibly in response to the acidification of phagosome. It contributes partly to the virulence by increasing the efficiency of beta-oxidation. Catalyzes the dehydrogenation of 2'-propanoyl-CoA ester side chains of 3-oxo-4-pregnene-20-carboxyl-CoA (3-OPC-CoA) to yield 3-oxo-4,17-pregnadiene-20-carboxyl-CoA (3-OPDC-CoA). Also able to dehydrogenate steroyl-CoA such as 3-oxo-chol-4-en-24-oyl-CoA (3-OCO-CoA), 1beta-(2'-propanoyl-CoA)-3a-alpha-H-7a-beta-methylhexahydro-4-indanone (indanone-CoA ester), hexahydroindanone and pregenenone. The chain is Acyl-CoA dehydrogenase FadE28 (fadE28) from Mycobacterium tuberculosis (strain ATCC 25618 / H37Rv).